A 503-amino-acid chain; its full sequence is Arabinose import ATP-binding protein AraG 1 (503 aa).

2 consecutive ABC transporter domains span residues 5–240 (LRFD…MVGR) and 253–497 (LGDV…LPQG). 37–44 (GENGAGKS) is a binding site for ATP.

Belongs to the ABC transporter superfamily. Arabinose importer (TC 3.A.1.2.2) family. The complex is composed of two ATP-binding proteins (AraG), two transmembrane proteins (AraH) and a solute-binding protein (AraF).

It is found in the cell inner membrane. It catalyses the reaction L-arabinose(out) + ATP + H2O = L-arabinose(in) + ADP + phosphate + H(+). In terms of biological role, part of the ABC transporter complex AraFGH involved in arabinose import. Responsible for energy coupling to the transport system. The sequence is that of Arabinose import ATP-binding protein AraG 1 from Burkholderia thailandensis (strain ATCC 700388 / DSM 13276 / CCUG 48851 / CIP 106301 / E264).